The sequence spans 81 residues: Photosystem I iron-sulfur center (81 aa).

4Fe-4S ferredoxin-type domains are found at residues 2–31 and 39–68; these read SHTVKIYDTCIGCTQCVRACPTDVLEMAPW and VASAPRTEDCVGCKRCESACPTDFLSVRVY. [4Fe-4S] cluster-binding residues include Cys-11, Cys-14, Cys-17, Cys-21, Cys-48, Cys-51, Cys-54, and Cys-58.

The eukaryotic PSI reaction center is composed of at least 11 subunits. The cofactor is [4Fe-4S] cluster.

It localises to the plastid. It is found in the chloroplast thylakoid membrane. It carries out the reaction reduced [plastocyanin] + hnu + oxidized [2Fe-2S]-[ferredoxin] = oxidized [plastocyanin] + reduced [2Fe-2S]-[ferredoxin]. Its function is as follows. Apoprotein for the two 4Fe-4S centers FA and FB of photosystem I (PSI); essential for photochemical activity. FB is the terminal electron acceptor of PSI, donating electrons to ferredoxin. The C-terminus interacts with PsaA/B/D and helps assemble the protein into the PSI complex. Required for binding of PsaD and PsaE to PSI. PSI is a plastocyanin/cytochrome c6-ferredoxin oxidoreductase, converting photonic excitation into a charge separation, which transfers an electron from the donor P700 chlorophyll pair to the spectroscopically characterized acceptors A0, A1, FX, FA and FB in turn. The sequence is that of Photosystem I iron-sulfur center from Tupiella akineta (Green alga).